Here is a 7760-residue protein sequence, read N- to C-terminus: Malpinin synthetase (7760 aa).

Disordered regions lie at residues 42-115 and 161-180; these read ENPE…VNEK and LDLP…GDRV. Positions 65 to 79 are enriched in polar residues; that stretch reads TPRSASPLSSYTGSP. A condensation 1 region spans residues 87–389; it reads TELSRTLSGD…LSLDERTFLL (303 aa). Residues 164–180 show a composition bias toward basic and acidic residues; it reads PTDRPRPSHPSFEGDRV. Residues 409–813 form an adenylation 1 region; the sequence is FEQQAERRPH…GRNDHQVKIR (405 aa). The Carrier 1 domain maps to 926-1000; it reads PPQGELETAI…AFAHAIGQHR (75 aa). O-(pantetheine 4'-phosphoryl)serine is present on Ser961. Residues 1046–1477 are dual epimerase/condensation (E/C) domain 1; that stretch reads QDIYALAPLQ…VLPADERKLL (432 aa). Residues 1498–1893 are adenylation 2; it reads FEQYADRVPN…GRTDYQVKIR (396 aa). The Carrier 2 domain maps to 2003-2077; sequence APEGEVENAI…ALAQSIGEHR (75 aa). The residue at position 2038 (Ser2038) is an O-(pantetheine 4'-phosphoryl)serine. A dual epimerase/condensation (E/C) domain 2 region spans residues 2099–2558; that stretch reads PLIDLNQNDI…LPTEERQLLT (460 aa). The tract at residues 2578 to 2973 is adenylation 3; that stretch reads FEQHVDRAPD…GRADFQVKIR (396 aa). The 75-residue stretch at 3083–3157 folds into the Carrier 3 domain; the sequence is APQGAVEAAI…ALAQSIGEHR (75 aa). Ser3118 is modified (O-(pantetheine 4'-phosphoryl)serine). Residues 3203-3634 form a dual epimerase/condensation (E/C) domain 3 region; sequence QDIYALAPLQ…HLNVLPAEER (432 aa). An adenylation 4 region spans residues 3658 to 4057; it reads FEQQAERTPD…GRNDDQIKIR (400 aa). The Carrier 4 domain occupies 4174 to 4248; the sequence is APQGEVETAL…AFASRVQEQL (75 aa). An O-(pantetheine 4'-phosphoryl)serine modification is found at Ser4209. The tract at residues 4267–4705 is condensation 2; the sequence is LPLSFAQQRL…AAEILSQDER (439 aa). An adenylation 5 region spans residues 4729–5133; sequence FEQRVESTPD…GRNDHQVKIR (405 aa). The Carrier 5 domain occupies 5250–5324; the sequence is APEGEVETAI…VFAASIGHHQ (75 aa). An O-(pantetheine 4'-phosphoryl)serine modification is found at Ser5285. The dual dehydration/condensation (C*) domain stretch occupies residues 5370–5804; that stretch reads QDIYSLSPLQ…VLPAEERTLL (435 aa). Residues 5825–6224 are adenylation 6; sequence FEQQSERTPE…GRNDDQVKIR (400 aa). The region spanning 6338-6412 is the Carrier 6 domain; sequence APQGEVETAL…ALAQSIGQHH (75 aa). Ser6373 carries the O-(pantetheine 4'-phosphoryl)serine modification. Residues 6458–6890 form a dual epimerase/condensation (E/C) domain 4 region; the sequence is QDIYALSPLQ…QLDTVPAEEH (433 aa). The adenylation 7 stretch occupies residues 6914–7300; sequence FEHQVERTPA…KFLPDGNVVC (387 aa). Residues 7428–7503 form the Carrier 7 domain; it reads EPRGAIENIL…ELAPRLLATG (76 aa). Position 7463 is an O-(pantetheine 4'-phosphoryl)serine (Ser7463). Residues 7561–7722 form a thioesterase (TE) domain region; it reads DNGNMASSLD…KPYVQGSIEV (162 aa).

It belongs to the NRP synthetase family.

Heptamodular nonribosomal peptide synthetase that catalyzes the biosynthesis of malpinins, natural products that show biosurfactant activities. Malpinins are acetylated hexapeptides (Ac-D-Leu/Val-D-Arg-D-Leu/Val-L-Phe/Leu-Dhb-D-Trp) containing a non-canonical amino acid derived from dehydration of L-Trp, (Z)-dehydrobutyrine (Dhb), at position 5, as well as a C-terminal D-amino acid, D-tryptophan, that can be oxidized to kynurenine. Incorporated D-amino acids in positions 1, 3 and 4 are variable resulting in the malpinin A-congeners malpinin B to E. Both modules M1 and M3 have relaxed specificity towards aliphatic amino acids (L-Leu &gt; L-Met &gt; L/D-Val &gt; L-Cys), explaining Val at position 1 and 3 in malpinin A-congeners malpinin B to D. The incorporation of L-Leu, but not N-acetyl-L-Leu by module 1 suggests the N-terminal acetylation occurs at a later stage of biosynthesis. Similar to M1 and M3, M4 has a broad substrate spectrum showing the highest activity with L-Phe followed by other hydrophobic amino acids (L-Phe &gt; L-Met = L-Trp). In contrast, M2, M5 and M6 are highly specific for L-Arg, L-Thr, and L-Trp, respectively. Solely, M7 converted its preferred substrate (L-Phe) with a 15 000-fold reduced turnover rate compared to the most active module M6, indicating that its A domain cannot contribute to the malpinin biosynthesis due to low activity. Since the last T domain in malA is apparently not loaded with an amino acid, either the TE domain must offload the oligopeptide from the preceding T domain or the dual E/C domain of M7 must transfer the final peptide chain to the free acceptor T domain of M7 prior to release. The protein is Malpinin synthetase of Mortierella alpina (Oleaginous fungus).